The chain runs to 555 residues: Hydroxylamine reductase (555 aa).

The [4Fe-4S] cluster site is built by cysteine 5, cysteine 8, cysteine 17, and cysteine 23. Residues histidine 248, glutamate 272, cysteine 316, cysteine 408, cysteine 436, cysteine 461, glutamate 496, and lysine 498 each coordinate hybrid [4Fe-2O-2S] cluster. Cysteine persulfide is present on cysteine 408.

The protein belongs to the HCP family. [4Fe-4S] cluster is required as a cofactor. It depends on hybrid [4Fe-2O-2S] cluster as a cofactor.

The protein localises to the cytoplasm. The enzyme catalyses A + NH4(+) + H2O = hydroxylamine + AH2 + H(+). In terms of biological role, catalyzes the reduction of hydroxylamine to form NH(3) and H(2)O. This is Hydroxylamine reductase from Natranaerobius thermophilus (strain ATCC BAA-1301 / DSM 18059 / JW/NM-WN-LF).